A 149-amino-acid chain; its full sequence is D-aminoacyl-tRNA deacylase (149 aa).

The short motif at 137–138 is the Gly-cisPro motif, important for rejection of L-amino acids element; that stretch reads GP.

The protein belongs to the DTD family. Homodimer.

It is found in the cytoplasm. The catalysed reaction is glycyl-tRNA(Ala) + H2O = tRNA(Ala) + glycine + H(+). It carries out the reaction a D-aminoacyl-tRNA + H2O = a tRNA + a D-alpha-amino acid + H(+). Its function is as follows. An aminoacyl-tRNA editing enzyme that deacylates mischarged D-aminoacyl-tRNAs. Also deacylates mischarged glycyl-tRNA(Ala), protecting cells against glycine mischarging by AlaRS. Acts via tRNA-based rather than protein-based catalysis; rejects L-amino acids rather than detecting D-amino acids in the active site. By recycling D-aminoacyl-tRNA to D-amino acids and free tRNA molecules, this enzyme counteracts the toxicity associated with the formation of D-aminoacyl-tRNA entities in vivo and helps enforce protein L-homochirality. The protein is D-aminoacyl-tRNA deacylase of Syntrophotalea carbinolica (strain DSM 2380 / NBRC 103641 / GraBd1) (Pelobacter carbinolicus).